Here is a 111-residue protein sequence, read N- to C-terminus: uncharacterized protein (111 aa).

Residues 4-51 adopt a coiled-coil conformation; sequence LGQVKVLEEKVAKAVHLVQMLKEENAALRAEIDGRGKRITELEQLVLX.

This is an uncharacterized protein from Treponema pallidum (strain Nichols).